The primary structure comprises 145 residues: Small ribosomal subunit protein uS9 (145 aa).

It belongs to the universal ribosomal protein uS9 family.

The protein localises to the cytoplasm. This is Small ribosomal subunit protein uS9 (RPS16) from Fritillaria agrestis (Stinkbells).